The primary structure comprises 271 residues: Glutamate racemase (271 aa).

Residues 10-11 (DS) and 42-43 (YG) contribute to the substrate site. Cysteine 73 acts as the Proton donor/acceptor in catalysis. 74–75 (NS) lines the substrate pocket. The active-site Proton donor/acceptor is cysteine 183. Position 184 to 185 (184 to 185 (TH)) interacts with substrate.

Belongs to the aspartate/glutamate racemases family.

It carries out the reaction L-glutamate = D-glutamate. It participates in cell wall biogenesis; peptidoglycan biosynthesis. Provides the (R)-glutamate required for cell wall biosynthesis. This is Glutamate racemase from Saccharopolyspora erythraea (strain ATCC 11635 / DSM 40517 / JCM 4748 / NBRC 13426 / NCIMB 8594 / NRRL 2338).